The following is a 160-amino-acid chain: 3-hydroxyacyl-[acyl-carrier-protein] dehydratase FabZ (160 aa).

Residue His63 is part of the active site.

It belongs to the thioester dehydratase family. FabZ subfamily.

It is found in the cytoplasm. The catalysed reaction is a (3R)-hydroxyacyl-[ACP] = a (2E)-enoyl-[ACP] + H2O. In terms of biological role, involved in unsaturated fatty acids biosynthesis. Catalyzes the dehydration of short chain beta-hydroxyacyl-ACPs and long chain saturated and unsaturated beta-hydroxyacyl-ACPs. This Xylella fastidiosa (strain M23) protein is 3-hydroxyacyl-[acyl-carrier-protein] dehydratase FabZ.